Here is a 503-residue protein sequence, read N- to C-terminus: Medium/long-chain-fatty-acid--CoA ligase FadD17 (503 aa).

It belongs to the ATP-dependent AMP-binding enzyme family.

It carries out the reaction a medium-chain fatty acid + ATP + CoA = a medium-chain fatty acyl-CoA + AMP + diphosphate. It catalyses the reaction a long-chain fatty acid + ATP + CoA = a long-chain fatty acyl-CoA + AMP + diphosphate. The protein operates within lipid metabolism; fatty acid biosynthesis. In terms of biological role, catalyzes the activation of medium/long-chain fatty acids as acyl-coenzyme A (acyl-CoA), which are then transferred to the multifunctional polyketide synthase (PKS) type III for further chain extension. This is Medium/long-chain-fatty-acid--CoA ligase FadD17 (fadD17) from Mycobacterium marinum (strain ATCC BAA-535 / M).